The following is a 445-amino-acid chain: MPCTCGNWRRWIRPLVVLLYIVGLLVVVPLCVWELQKLEVGIHTKAWFIAGIFLLMTIPISLWGILQHLVHYTQPELQKPIIRILWMVPIYSLDSWIALKYPNIAIYVDTCRECYEAYVIYNFMVFLSNYLTNRYPNLVLIIEAKDQQRHLPPLCCCPSWAMGEVLLFRCKLGVLQYTVVRPFTTIIALICELVGVYDEGNFSFDNAWTYLVILNNMSQLFAMYCLVLFYKVLREELNPIQPVGKFLCVKMVVFVSFWQAVLIALLVKVGVISEKHTWEWQSVEAVATGLQDFIICVEMFLAAIAHHYSFSYKPYVQEAEEGSCFDSFLAMWDISDIRADISEQVRNVGRTVLGQPRKMFFAEDHEQNEHTSLLSSSTQDPISDASSMPSSPMGHYQGFGHTVTPLTTPTTVPVVDGIYNTSATRDTEESPELMHNSSEKALDRS.

The next 7 helical transmembrane spans lie at 15–35 (LVVL…VWEL), 46–66 (AWFI…WGIL), 84–104 (ILWM…YPNI), 177–197 (YTVV…VGVY), 210–230 (YLVI…VLFY), 252–272 (VVFV…VGVI), and 285–305 (AVAT…AAIA). Disordered stretches follow at residues 369 to 393 (EHTS…SSPM) and 421 to 445 (TSAT…LDRS). Polar residues predominate over residues 370–390 (HTSLLSSSTQDPISDASSMPS).

It belongs to the TMEM184 family.

Its subcellular location is the membrane. Functionally, may play a role in cell growth. The chain is Transmembrane protein 184C (TMEM184C) from Gallus gallus (Chicken).